The chain runs to 92 residues: Small ribosomal subunit protein uS19 (92 aa).

It belongs to the universal ribosomal protein uS19 family.

In terms of biological role, protein S19 forms a complex with S13 that binds strongly to the 16S ribosomal RNA. This chain is Small ribosomal subunit protein uS19, found in Clostridium botulinum (strain Eklund 17B / Type B).